Reading from the N-terminus, the 120-residue chain is Large ribosomal subunit protein bL20 (120 aa).

It belongs to the bacterial ribosomal protein bL20 family.

Binds directly to 23S ribosomal RNA and is necessary for the in vitro assembly process of the 50S ribosomal subunit. It is not involved in the protein synthesizing functions of that subunit. The protein is Large ribosomal subunit protein bL20 of Cereibacter sphaeroides (strain ATCC 17029 / ATH 2.4.9) (Rhodobacter sphaeroides).